A 302-amino-acid polypeptide reads, in one-letter code: DDRGK domain-containing protein 1 (302 aa).

The chain crosses the membrane as a helical span at residues 1-21 (MDPLLLGSVGVLVLAVTLIIW). Topologically, residues 22-302 (RLLKLQWDEK…IRLETPSAAE (281 aa)) are cytoplasmic. Positions 101-178 (EYDEDGKKIG…EREEKERKEH (78 aa)) are disordered. The segment covering 118–178 (QAKEEKRQMR…EREEKERKEH (61 aa)) has biased composition (basic and acidic residues).

The protein belongs to the DDRGK1 family.

It is found in the endoplasmic reticulum membrane. In terms of biological role, substrate adapter for ufmylation, the covalent attachment of the ubiquitin-like modifier ufm-1 to substrate proteins. The polypeptide is DDRGK domain-containing protein 1 (Caenorhabditis elegans).